The primary structure comprises 201 residues: Small ribosomal subunit protein uS4c (201 aa).

A disordered region spans residues leucine 15–glutamine 43. The 61-residue stretch at methionine 89–glutamine 149 folds into the S4 RNA-binding domain.

In terms of assembly, component of the chloroplast small ribosomal subunit (SSU). Mature 70S chloroplast ribosomes of higher plants consist of a small (30S) and a large (50S) subunit. The 30S small subunit contains 1 molecule of ribosomal RNA (16S rRNA) and 24 different proteins. The 50S large subunit contains 3 rRNA molecules (23S, 5S and 4.5S rRNA) and 33 different proteins.

Its subcellular location is the plastid. It is found in the chloroplast. Its function is as follows. Component of the chloroplast ribosome (chloro-ribosome), a dedicated translation machinery responsible for the synthesis of chloroplast genome-encoded proteins, including proteins of the transcription and translation machinery and components of the photosynthetic apparatus. The polypeptide is Small ribosomal subunit protein uS4c (rps4) (Spinacia oleracea (Spinach)).